Consider the following 609-residue polypeptide: Arginine--tRNA ligase (609 aa).

Positions 114–124 match the 'HIGH' region motif; that stretch reads VNPNKELHVGH.

Belongs to the class-I aminoacyl-tRNA synthetase family. Monomer.

Its subcellular location is the cytoplasm. It carries out the reaction tRNA(Arg) + L-arginine + ATP = L-arginyl-tRNA(Arg) + AMP + diphosphate. The chain is Arginine--tRNA ligase from Deinococcus radiodurans (strain ATCC 13939 / DSM 20539 / JCM 16871 / CCUG 27074 / LMG 4051 / NBRC 15346 / NCIMB 9279 / VKM B-1422 / R1).